The primary structure comprises 113 residues: Urease subunit beta (113 aa).

This sequence belongs to the urease beta subunit family. Heterotrimer of UreA (gamma), UreB (beta) and UreC (alpha) subunits. Three heterotrimers associate to form the active enzyme.

It localises to the cytoplasm. It carries out the reaction urea + 2 H2O + H(+) = hydrogencarbonate + 2 NH4(+). It participates in nitrogen metabolism; urea degradation; CO(2) and NH(3) from urea (urease route): step 1/1. The polypeptide is Urease subunit beta (Nitrosospira multiformis (strain ATCC 25196 / NCIMB 11849 / C 71)).